We begin with the raw amino-acid sequence, 538 residues long: Cytochrome P450 monooxygenase claM (538 aa).

The helical transmembrane segment at 36–56 (LSIGLVVLIGAISSFLLQQFL) threads the bilayer. N306 and N425 each carry an N-linked (GlcNAc...) asparagine glycan. C472 contributes to the heme binding site.

The protein belongs to the cytochrome P450 family. Requires heme as cofactor.

The protein resides in the membrane. It carries out the reaction 2 nataloe emodin + reduced [NADPH--hemoprotein reductase] + O2 = cladofulvin + oxidized [NADPH--hemoprotein reductase] + 2 H2O + H(+). It participates in pigment biosynthesis. Cytochrome P450 monooxygenase; part of the gene cluster that mediates the biosynthesis of the bianthraquinone cladofulvin, a conidial pigment not required for virulence but that plays a role in fitness and resistance to environmental stresses including UV light and low-temperature stress. The pathway begins with the synthesis of atrochrysone thioester by the polyketide synthase (PKS) claG. The atrochrysone carboxyl ACP thioesterase claF then breaks the thioester bond and releases the atrochrysone carboxylic acid from claG. This compound is decarboxylated by claH to yield emodin, which is further converted to chrysophanol hydroquinone by the reductase claC and the dehydratase claB. The cytochrome monooxygenase P450 claM then catalyzes the dimerization of nataloe-emodin to cladofulvin. The chain is Cytochrome P450 monooxygenase claM from Passalora fulva (Tomato leaf mold).